The primary structure comprises 221 residues: MTYRDRPLGELAISIPRATRLFRQYELDFCCGGKLTLQRAAARHSLDLVMLESQLAELDSTPDQHRDWRQAPLDELCAFIVTRYHQRHRDQLPELVLMAQKVEQVHTGKTGCPRGLAKQLDSLRQELDSHMMKEERILFPLIEQGEGARCHGPISVMEHEHRDAGELLDVIRFLTDNMTPPTGACTTWRALYAGISELINDLMEHVSLENNLLFPRALGDV.

The protein belongs to the RIC family. YtfE subfamily. Homodimer.

The protein localises to the cytoplasm. Di-iron-containing protein involved in the repair of iron-sulfur clusters damaged by oxidative and nitrosative stress conditions. The protein is Iron-sulfur cluster repair protein YtfE of Edwardsiella ictaluri (strain 93-146).